The following is an 88-amino-acid chain: MARMVFCVKLNKEAEGMKFPPLPNELGKRIFENVSQEAWAAWTRHQTMLINENRLSLADPRAREYLAQQMEQYFFGDGADAVQGYVPQ.

It belongs to the Fe(2+)-trafficking protein family.

In terms of biological role, could be a mediator in iron transactions between iron acquisition and iron-requiring processes, such as synthesis and/or repair of Fe-S clusters in biosynthetic enzymes. The sequence is that of Probable Fe(2+)-trafficking protein from Neisseria gonorrhoeae (strain ATCC 700825 / FA 1090).